The primary structure comprises 705 residues: Elongation factor G (705 aa).

Residues 8–290 form the tr-type G domain; sequence ERYRNFGIMA…GVVHLLPSPA (283 aa). GTP contacts are provided by residues 17–24, 88–92, and 142–145; these read AHIDAGKT, DTPGH, and NKMD. The tract at residues 290-309 is disordered; it reads ADRPPVQGIDEDEKEDTRAA.

Belongs to the TRAFAC class translation factor GTPase superfamily. Classic translation factor GTPase family. EF-G/EF-2 subfamily.

The protein localises to the cytoplasm. Its function is as follows. Catalyzes the GTP-dependent ribosomal translocation step during translation elongation. During this step, the ribosome changes from the pre-translocational (PRE) to the post-translocational (POST) state as the newly formed A-site-bound peptidyl-tRNA and P-site-bound deacylated tRNA move to the P and E sites, respectively. Catalyzes the coordinated movement of the two tRNA molecules, the mRNA and conformational changes in the ribosome. The polypeptide is Elongation factor G (Xanthomonas axonopodis pv. citri (strain 306)).